The following is a 497-amino-acid chain: Angiopoietin-1 (497 aa).

Residues 1–19 (MTVFLSFAFFAAILTHIGC) form the signal peptide. Residues 81–119 (QKLQHLEHVMENYTQWLQKLENYIVENMKSEMAQIQQNA) are a coiled coil. N-linked (GlcNAc...) asparagine glycans are attached at residues N92, N122, N154, N243, and N294. Residues 153-261 (LNQTSRLEIQ…LELMDTVHNL (109 aa)) are a coiled coil. Positions 276 to 496 (REEEKPFRDC…STTMMIRPLD (221 aa)) constitute a Fibrinogen C-terminal domain. Intrachain disulfides connect C285-C314 and C438-C451.

As to quaternary structure, homooligomer. Interacts with TEK/TIE2. Interacts with SVEP1/polydom. Interacts with THBD; this interaction significantly inhibits the generation of activated PC and TAFIa/CPB2 by the thrombin/thrombomodulin complex.

It is found in the secreted. Its function is as follows. Binds and activates TIE2 receptor by inducing its tyrosine phosphorylation. Implicated in endothelial developmental processes later and distinct from that of VEGF. Appears to play a crucial role in mediating reciprocal interactions between the endothelium and surrounding matrix and mesenchyme. Mediates blood vessel maturation/stability. It may play an important role in the heart early development. The chain is Angiopoietin-1 (Angpt1) from Rattus norvegicus (Rat).